Reading from the N-terminus, the 435-residue chain is Proline--tRNA ligase (435 aa).

The protein belongs to the class-II aminoacyl-tRNA synthetase family. ProS type 2 subfamily. Homodimer.

The protein localises to the cytoplasm. The catalysed reaction is tRNA(Pro) + L-proline + ATP = L-prolyl-tRNA(Pro) + AMP + diphosphate. Its function is as follows. Catalyzes the attachment of proline to tRNA(Pro) in a two-step reaction: proline is first activated by ATP to form Pro-AMP and then transferred to the acceptor end of tRNA(Pro). This Rhodospirillum rubrum (strain ATCC 11170 / ATH 1.1.1 / DSM 467 / LMG 4362 / NCIMB 8255 / S1) protein is Proline--tRNA ligase.